A 59-amino-acid chain; its full sequence is Ferredoxin (59 aa).

In terms of domain architecture, 4Fe-4S ferredoxin-type spans 2 to 29 (KVSVDKDACIGCGVCASICPDVFEMDDD). Positions 10, 13, and 16 each coordinate [4Fe-4S] cluster. An intrachain disulfide couples C20 to C43. C51 contributes to the [4Fe-4S] cluster binding site.

It depends on [4Fe-4S] cluster as a cofactor. The cofactor is [3Fe-4S] cluster.

Ferredoxins are iron-sulfur proteins that transfer electrons in a wide variety of metabolic reactions. The protein is Ferredoxin of Thermococcus litoralis.